The primary structure comprises 24 residues: FWGALIKGAAKLIPSVVGLFKKKQ.

Expressed by the venom gland.

Its subcellular location is the secreted. The protein resides in the target cell membrane. Has a broad spectrum of activity against both Gram-positive and Gram-negative bacteria and S.cerevisiae. Has insecticidal and hemolytic activities. May act by disrupting the integrity of the bacterial cell membrane. The chain is M-poneritoxin-Ng1e from Neoponera goeldii (Ponerine ant).